Consider the following 372-residue polypeptide: Peptidyl-prolyl cis-trans isomerase D (372 aa).

The 165-residue stretch at 14–178 (YFDISIGGKS…KEALIVDCGE (165 aa)) folds into the PPIase cyclophilin-type domain. TPR repeat units lie at residues 219-252 (AKAS…INEE), 271-304 (FSLN…GGVK), and 309-342 (AKAF…APND).

This sequence belongs to the cyclophilin-type PPIase family. PPIase D subfamily.

Its subcellular location is the cytoplasm. It catalyses the reaction [protein]-peptidylproline (omega=180) = [protein]-peptidylproline (omega=0). Functionally, PPIases accelerate the folding of proteins. It catalyzes the cis-trans isomerization of proline imidic peptide bonds in oligopeptides. The protein is Peptidyl-prolyl cis-trans isomerase D (CPR6) of Gibberella zeae (strain ATCC MYA-4620 / CBS 123657 / FGSC 9075 / NRRL 31084 / PH-1) (Wheat head blight fungus).